A 206-amino-acid polypeptide reads, in one-letter code: uncharacterized protein (206 aa).

Residues 32-201 (VYIDAGHGGE…AADAIVNGID (170 aa)) form the MurNAc-LAA domain.

It belongs to the N-acetylmuramoyl-L-alanine amidase 3 family.

This is an uncharacterized protein from Bacillus subtilis (strain 168).